The sequence spans 127 residues: Glycine cleavage system H protein (127 aa).

Positions 24–106 (TVTVGITDHA…FEGAWIAKIK (83 aa)) constitute a Lipoyl-binding domain. K65 carries the post-translational modification N6-lipoyllysine.

This sequence belongs to the GcvH family. In terms of assembly, the glycine cleavage system is composed of four proteins: P, T, L and H. (R)-lipoate is required as a cofactor.

Functionally, the glycine cleavage system catalyzes the degradation of glycine. The H protein shuttles the methylamine group of glycine from the P protein to the T protein. In Marinomonas sp. (strain MWYL1), this protein is Glycine cleavage system H protein.